Reading from the N-terminus, the 983-residue chain is Glycine dehydrogenase (decarboxylating) (983 aa).

Lysine 726 carries the N6-(pyridoxal phosphate)lysine modification.

The protein belongs to the GcvP family. The glycine cleavage system is composed of four proteins: P, T, L and H. It depends on pyridoxal 5'-phosphate as a cofactor.

The catalysed reaction is N(6)-[(R)-lipoyl]-L-lysyl-[glycine-cleavage complex H protein] + glycine + H(+) = N(6)-[(R)-S(8)-aminomethyldihydrolipoyl]-L-lysyl-[glycine-cleavage complex H protein] + CO2. Functionally, the glycine cleavage system catalyzes the degradation of glycine. The P protein binds the alpha-amino group of glycine through its pyridoxal phosphate cofactor; CO(2) is released and the remaining methylamine moiety is then transferred to the lipoamide cofactor of the H protein. This chain is Glycine dehydrogenase (decarboxylating), found in Synechocystis sp. (strain ATCC 27184 / PCC 6803 / Kazusa).